The following is a 279-amino-acid chain: Secreted RxLR effector protein 152 (279 aa).

An N-terminal signal peptide occupies residues 1 to 22 (MRNGSVLFGLFFIGHSCSVLLA). A RxLR-dEER motif is present at residues 47–62 (RTLQADDSERTLAEER).

Belongs to the RxLR effector family.

The protein localises to the secreted. The protein resides in the host nucleus. Functionally, secreted effector that completely suppresses the host cell death induced by cell death-inducing proteins. In Plasmopara viticola (Downy mildew of grapevine), this protein is Secreted RxLR effector protein 152.